The sequence spans 21 residues: Large ribosomal subunit protein uL10 (21 aa).

This sequence belongs to the universal ribosomal protein uL10 family. Part of the ribosomal stalk of the 50S ribosomal subunit. The N-terminus interacts with L11 and the large rRNA to form the base of the stalk. The C-terminus forms an elongated spine to which L12 dimers bind in a sequential fashion forming a multimeric L10(L12)X complex.

In terms of biological role, forms part of the ribosomal stalk, playing a central role in the interaction of the ribosome with GTP-bound translation factors. The chain is Large ribosomal subunit protein uL10 (rplJ) from Bacillus cereus.